The primary structure comprises 121 residues: Small ribosomal subunit protein uS13 (121 aa).

A disordered region spans residues 95–121 (LPMRGQRTRTNARTRKGPRKAAASLKK).

It belongs to the universal ribosomal protein uS13 family. In terms of assembly, part of the 30S ribosomal subunit. Forms a loose heterodimer with protein S19. Forms two bridges to the 50S subunit in the 70S ribosome.

In terms of biological role, located at the top of the head of the 30S subunit, it contacts several helices of the 16S rRNA. In the 70S ribosome it contacts the 23S rRNA (bridge B1a) and protein L5 of the 50S subunit (bridge B1b), connecting the 2 subunits; these bridges are implicated in subunit movement. Contacts the tRNAs in the A and P-sites. This Polaromonas naphthalenivorans (strain CJ2) protein is Small ribosomal subunit protein uS13.